Reading from the N-terminus, the 481-residue chain is Extracellular exo-alpha-(1-&gt;5)-L-arabinofuranosidase (481 aa).

A signal peptide spans 1 to 27 (MRRLTVRLFTAVLAALALLTMGTPAHA). The segment at 37–336 (FTNPLAEKRA…KVYWNADGTP (300 aa)) is catalytic. Aspartate 47 acts as the Proton acceptor in catalysis. Asparagine 186 serves as a coordination point for substrate. The Proton donor role is filled by glutamate 223. Residues histidine 287, arginine 321, 363–366 (HWDF), aspartate 379, 457–460 (HYEN), and aspartate 475 contribute to the substrate site. Positions 349 to 479 (VRFSSYNYPD…ALDRQDATFY (131 aa)) are ABD.

The protein belongs to the glycosyl hydrolase 43 family.

Its subcellular location is the secreted. It catalyses the reaction Hydrolysis of terminal non-reducing alpha-L-arabinofuranoside residues in alpha-L-arabinosides.. It functions in the pathway glycan metabolism; L-arabinan degradation. Functionally, involved in the degradation of arabinan and is a key enzyme in the complete degradation of the plant cell wall. Catalyzes only the cleavage of terminal alpha-(1-&gt;5) arabinofuranosyl bonds of arabinan present in the arabinofuranosyl polysaccharides or oligosaccharides. It cannot act on other arabinose-containing polysaccharides and arabinoxylo-oligosaccharides. This Streptomyces avermitilis (strain ATCC 31267 / DSM 46492 / JCM 5070 / NBRC 14893 / NCIMB 12804 / NRRL 8165 / MA-4680) protein is Extracellular exo-alpha-(1-&gt;5)-L-arabinofuranosidase.